The following is a 270-amino-acid chain: MPRYGFHLSIAGKKGVAGAVEEATALGLTAFQIFAKSPRSWRPRALSPAEVEAFRALREASGGLPAVIHASYLVNLGAEGELWEKSVASLADDLEKAALLGVEYVVVHPGSGRPERVKEGALKALRLAGVRSRPVLLVENTAGGGEKVGARFEELAWLVADTPLQVCLDTCHAYAAGYDVAEDPLGVLDALDRAVGLERVPVVHLNDSVGGLGSRVDHHAHLLQGKIGEGLKRVFLDPRLKDRVFILETPRGPEEDAWNLRVLRAWLEEA.

Zn(2+) is bound by residues histidine 69, histidine 108, glutamate 139, aspartate 169, histidine 172, histidine 204, aspartate 217, histidine 219, and glutamate 248.

This sequence belongs to the AP endonuclease 2 family. The cofactor is Zn(2+).

The catalysed reaction is Endonucleolytic cleavage to 5'-phosphooligonucleotide end-products.. Functionally, endonuclease IV plays a role in DNA repair. It cleaves phosphodiester bonds at apurinic or apyrimidinic (AP) sites, generating a 3'-hydroxyl group and a 5'-terminal sugar phosphate. In addition, possesses a 3'-5' exonuclease activity. The chain is Endonuclease 4 from Thermus thermophilus (strain ATCC BAA-163 / DSM 7039 / HB27).